A 59-amino-acid polypeptide reads, in one-letter code: Large ribosomal subunit protein uL30 (59 aa).

Belongs to the universal ribosomal protein uL30 family. As to quaternary structure, part of the 50S ribosomal subunit.

This is Large ribosomal subunit protein uL30 from Rhodococcus erythropolis (strain PR4 / NBRC 100887).